An 88-amino-acid chain; its full sequence is RNA-binding protein Hfq (88 aa).

Residues 10 to 70 (DRFLNILRTK…ISTILPAEYI (61 aa)) enclose the Sm domain.

It belongs to the Hfq family. Homohexamer.

In terms of biological role, RNA chaperone that binds small regulatory RNA (sRNAs) and mRNAs to facilitate mRNA translational regulation in response to envelope stress, environmental stress and changes in metabolite concentrations. Also binds with high specificity to tRNAs. This chain is RNA-binding protein Hfq, found in Fervidobacterium nodosum (strain ATCC 35602 / DSM 5306 / Rt17-B1).